The primary structure comprises 99 residues: NADH-quinone oxidoreductase subunit K (99 aa).

3 helical membrane-spanning segments follow: residues 3 to 23 (PENY…GVLL), 28 to 48 (IVVF…FVTF), and 62 to 82 (FFTM…IMII).

This sequence belongs to the complex I subunit 4L family. In terms of assembly, NDH-1 is composed of 14 different subunits. Subunits NuoA, H, J, K, L, M, N constitute the membrane sector of the complex.

The protein resides in the cell membrane. The enzyme catalyses a quinone + NADH + 5 H(+)(in) = a quinol + NAD(+) + 4 H(+)(out). NDH-1 shuttles electrons from NADH, via FMN and iron-sulfur (Fe-S) centers, to quinones in the respiratory chain. The immediate electron acceptor for the enzyme in this species is believed to be a menaquinone. Couples the redox reaction to proton translocation (for every two electrons transferred, four hydrogen ions are translocated across the cytoplasmic membrane), and thus conserves the redox energy in a proton gradient. The protein is NADH-quinone oxidoreductase subunit K of Rhodococcus erythropolis (strain PR4 / NBRC 100887).